The sequence spans 200 residues: Small ribosomal subunit protein uS4 (200 aa).

An S4 RNA-binding domain is found at S92–V155.

The protein belongs to the universal ribosomal protein uS4 family. In terms of assembly, part of the 30S ribosomal subunit. Contacts protein S5. The interaction surface between S4 and S5 is involved in control of translational fidelity.

One of the primary rRNA binding proteins, it binds directly to 16S rRNA where it nucleates assembly of the body of the 30S subunit. In terms of biological role, with S5 and S12 plays an important role in translational accuracy. The polypeptide is Small ribosomal subunit protein uS4 (Staphylococcus aureus (strain JH9)).